The chain runs to 222 residues: MERKGSAAGAKGNPSPPAAGEGQRPPPPLCVPGGGGGAPARGQVGAAAEPAELIRRAHEFKSQGAQCYKDKKFREAIGKYHRALLELKGLLPPPGERERDSRPASPAGALKPGRLSEEQSKTVEAIEIDCYNSLAACLLQAELVNYERVKEYCLKVLKKEGENFKALYRSGVAFYHLGDYDKALYYLKEARTQQPTDTNVIRYIQLTEMKLSRCSQREKEAM.

2 disordered regions span residues 1 to 49 (MERK…AAAE) and 88 to 116 (KGLL…GRLS). The TPR 1 repeat unit spans residues 56–89 (RAHEFKSQGAQCYKDKKFREAIGKYHRALLELKG). Ser-105 is subject to Phosphoserine. TPR repeat units follow at residues 125-160 (AIEI…LKKE) and 161-194 (GENF…RTQQ).

It belongs to the TTC9 family.

This chain is Tetratricopeptide repeat protein 9A (TTC9), found in Homo sapiens (Human).